Here is a 366-residue protein sequence, read N- to C-terminus: Fe-S cluster assembly protein DRE2 (366 aa).

The segment at 8–167 (AQGSGRFLLL…KPDFGAQQAV (160 aa)) is N-terminal SAM-like domain. Residues 100 to 136 (RNRDNQIWGSGSDSAAGLGSSDGGGGGGGGEKKSSSE) are disordered. Low complexity predominate over residues 108–118 (GSGSDSAAGLG). The span at 119–128 (SSDGGGGGGG) shows a compositional bias: gly residues. The interval 168 to 258 (PLKLGRKKNL…EEELLGEFDM (91 aa)) is linker. [2Fe-2S] cluster is bound by residues cysteine 268, cysteine 279, cysteine 282, and cysteine 284. The segment at 268 to 284 (CRPKAGKRRRACKDCTC) is fe-S binding site A. [4Fe-4S] cluster contacts are provided by cysteine 329, cysteine 332, cysteine 340, and cysteine 343. 2 short sequence motifs (cx2C motif) span residues 329–332 (CGNC) and 340–343 (CDGC). The fe-S binding site B stretch occupies residues 329–343 (CGNCALGDAFRCDGC).

Belongs to the anamorsin family. In terms of assembly, monomer. Interacts with TAH18. Interacts with MIA40. It depends on [2Fe-2S] cluster as a cofactor. [4Fe-4S] cluster is required as a cofactor.

The protein resides in the cytoplasm. It is found in the mitochondrion intermembrane space. Component of the cytosolic iron-sulfur (Fe-S) protein assembly (CIA) machinery required for the maturation of extramitochondrial Fe-S proteins. Part of an electron transfer chain functioning in an early step of cytosolic Fe-S biogenesis, facilitating the de novo assembly of a [4Fe-4S] cluster on the scaffold complex CFD1-NBP35. Electrons are transferred to DRE2 from NADPH via the FAD- and FMN-containing protein TAH18. TAH18-DRE2 are also required for the assembly of the diferric tyrosyl radical cofactor of ribonucleotide reductase (RNR), probably by providing electrons for reduction during radical cofactor maturation in the catalytic small subunit RNR2. The protein is Fe-S cluster assembly protein DRE2 of Paracoccidioides lutzii (strain ATCC MYA-826 / Pb01) (Paracoccidioides brasiliensis).